Consider the following 316-residue polypeptide: HPr kinase/phosphorylase (316 aa).

Catalysis depends on residues H146 and K167. 161–168 (GESGLGKS) contributes to the ATP binding site. Mg(2+) is bound at residue S168. Residue D185 is the Proton acceptor; for phosphorylation activity. Proton donor; for dephosphorylation activity of the active site. The interval 209-218 (LEVRGIGLLD) is important for the catalytic mechanism of both phosphorylation and dephosphorylation. E210 provides a ligand contact to Mg(2+). R252 is an active-site residue. The tract at residues 273 to 278 (QVEAGR) is important for the catalytic mechanism of dephosphorylation.

Belongs to the HPrK/P family. As to quaternary structure, homohexamer. Mg(2+) serves as cofactor.

The catalysed reaction is [HPr protein]-L-serine + ATP = [HPr protein]-O-phospho-L-serine + ADP + H(+). It catalyses the reaction [HPr protein]-O-phospho-L-serine + phosphate + H(+) = [HPr protein]-L-serine + diphosphate. Its function is as follows. Catalyzes the ATP- as well as the pyrophosphate-dependent phosphorylation of a specific serine residue in HPr, a phosphocarrier protein of the phosphoenolpyruvate-dependent sugar phosphotransferase system (PTS). HprK/P also catalyzes the pyrophosphate-producing, inorganic phosphate-dependent dephosphorylation (phosphorolysis) of seryl-phosphorylated HPr (P-Ser-HPr). This Polaromonas naphthalenivorans (strain CJ2) protein is HPr kinase/phosphorylase.